The chain runs to 372 residues: Lipoyl synthase, mitochondrial (372 aa).

Residues Met-1 to Pro-27 constitute a mitochondrion transit peptide. [4Fe-4S] cluster is bound by residues Cys-106, Cys-111, Cys-117, Cys-137, Cys-141, Cys-144, and Ser-352. One can recognise a Radical SAM core domain in the interval Glu-122–His-341.

It belongs to the radical SAM superfamily. Lipoyl synthase family. Requires [4Fe-4S] cluster as cofactor.

It is found in the mitochondrion. The catalysed reaction is [[Fe-S] cluster scaffold protein carrying a second [4Fe-4S](2+) cluster] + N(6)-octanoyl-L-lysyl-[protein] + 2 oxidized [2Fe-2S]-[ferredoxin] + 2 S-adenosyl-L-methionine + 4 H(+) = [[Fe-S] cluster scaffold protein] + N(6)-[(R)-dihydrolipoyl]-L-lysyl-[protein] + 4 Fe(3+) + 2 hydrogen sulfide + 2 5'-deoxyadenosine + 2 L-methionine + 2 reduced [2Fe-2S]-[ferredoxin]. It functions in the pathway protein modification; protein lipoylation via endogenous pathway; protein N(6)-(lipoyl)lysine from octanoyl-[acyl-carrier-protein]: step 2/2. Functionally, catalyzes the radical-mediated insertion of two sulfur atoms into the C-6 and C-8 positions of the octanoyl moiety bound to the lipoyl domains of lipoate-dependent enzymes, thereby converting the octanoylated domains into lipoylated derivatives. The polypeptide is Lipoyl synthase, mitochondrial (Homo sapiens (Human)).